A 358-amino-acid chain; its full sequence is Tripartite motif-containing protein 54 (358 aa).

The RING-type zinc-finger motif lies at 26-82 (CPICLEMFSKPVVILPCQHNLCRKCANDVFQASNPLWQSRGSTTVSSGGRFRCPSCR). The B box-type zinc-finger motif lies at 121–163 (EQHLMCEEHEEEKINIYCLSCEVPTCSLCKVFGAHKDCEVAPL). Residues Cys-126, His-129, Cys-149, and His-155 each contribute to the Zn(2+) site. The mediates microtubule-binding and homooligomerization stretch occupies residues 168–211 (KRQKSELSDGIAMLVAGNDRVQAVITQMEEVCQTIEDNSRRQKQ). Positions 220–258 (LCAVLEERKGELLQALAREQEEKLQRVRGLIRQYGDHLE) form a coiled coil. One can recognise a COS domain in the interval 271–329 (MEEPQMALYLQQAKELINKVGAMSKVELAGRPEPGYESMEQFTVRVEHVAEMLRTIDFQ). The tract at residues 326–358 (IDFQPGASGEEEEVAPDGEEGSAGPEEERPDGP) is disordered. The segment covering 334–345 (GEEEEVAPDGEE) has biased composition (acidic residues).

In terms of assembly, homooligomer and heterooligomer. Interacts with tubulin. Interacts with TRIM63 and probably with TRIM55. In terms of tissue distribution, specifically expressed in heart and skeletal muscle.

The protein localises to the cytoplasm. It is found in the cytoskeleton. It localises to the myofibril. The protein resides in the sarcomere. Its subcellular location is the z line. May bind and stabilize microtubules during myotubes formation. The sequence is that of Tripartite motif-containing protein 54 (TRIM54) from Homo sapiens (Human).